The following is a 149-amino-acid chain: D-aminoacyl-tRNA deacylase (149 aa).

The Gly-cisPro motif, important for rejection of L-amino acids motif lies at 137-138; that stretch reads GP.

This sequence belongs to the DTD family. As to quaternary structure, homodimer.

Its subcellular location is the cytoplasm. The catalysed reaction is glycyl-tRNA(Ala) + H2O = tRNA(Ala) + glycine + H(+). It catalyses the reaction a D-aminoacyl-tRNA + H2O = a tRNA + a D-alpha-amino acid + H(+). Its function is as follows. An aminoacyl-tRNA editing enzyme that deacylates mischarged D-aminoacyl-tRNAs. Also deacylates mischarged glycyl-tRNA(Ala), protecting cells against glycine mischarging by AlaRS. Acts via tRNA-based rather than protein-based catalysis; rejects L-amino acids rather than detecting D-amino acids in the active site. By recycling D-aminoacyl-tRNA to D-amino acids and free tRNA molecules, this enzyme counteracts the toxicity associated with the formation of D-aminoacyl-tRNA entities in vivo and helps enforce protein L-homochirality. This Koribacter versatilis (strain Ellin345) protein is D-aminoacyl-tRNA deacylase.